The following is a 472-amino-acid chain: MPIATINPATGETVKTFTPASDAEVDAAIARAYERFLDYRHSTTFAQRAQWANATADLLEAEADEVAAMMTLEMGKTLKSAKAEALKCAKGFRYYAQNAEQLLADEPADAGKVGAARAYIRYQPLGVVLAVMPWNFPLWQAVRFAAPALMAGNVGILKHASNVPQSALYLADVITRGGFPEGCFQTLLVPSSAVERILRDPRVAAATLTGSEPAGQSVAAIAGDEIKPTVLELGGSDPFIVMPSADLDEAVKTAVTARVQNNGQSCIAAKRFIVHTDIYDTFVDKFVEQMKALKVGDPTDPATDVGPLATESGRDEIAKQVDDAVAAGATLRCGGKPLDGPGWFYPPTVVTDITKDMALYTEEVFGPVASMYRAADIDEAIEIANATTFGLGSNAWTNDAAEQQRFIDDIEAGQVFINGMTVSYPELGFGGVKRSGYGRELAGLGIRAFCNAKTVWIGSSKSGDAGGGSKVE.

Residues 134–135 (WN), 158–161 (KHAS), and 210–211 (GS) each bind NADP(+). Glu-232 functions as the Proton acceptor in the catalytic mechanism. NADP(+) is bound at residue Leu-233. Cys-266 serves as the catalytic Nucleophile. Glu-363 contributes to the NADP(+) binding site.

It belongs to the aldehyde dehydrogenase family.

It catalyses the reaction succinate semialdehyde + NADP(+) + H2O = succinate + NADPH + 2 H(+). Functionally, catalyzes the NADP(+)-dependent oxidation of succinate semialdehyde to succinate. It is believed to be the main source of succinate semialdehyde dehydrogenase activity in Mycobacterium. This chain is Succinate-semialdehyde dehydrogenase [NADP(+)] (gabD1), found in Mycobacterium avium (strain 104).